Here is a 416-residue protein sequence, read N- to C-terminus: Gamma-glutamyl phosphate reductase (416 aa).

This sequence belongs to the gamma-glutamyl phosphate reductase family.

The protein resides in the cytoplasm. The enzyme catalyses L-glutamate 5-semialdehyde + phosphate + NADP(+) = L-glutamyl 5-phosphate + NADPH + H(+). It functions in the pathway amino-acid biosynthesis; L-proline biosynthesis; L-glutamate 5-semialdehyde from L-glutamate: step 2/2. In terms of biological role, catalyzes the NADPH-dependent reduction of L-glutamate 5-phosphate into L-glutamate 5-semialdehyde and phosphate. The product spontaneously undergoes cyclization to form 1-pyrroline-5-carboxylate. This Streptococcus pyogenes serotype M4 (strain MGAS10750) protein is Gamma-glutamyl phosphate reductase.